Reading from the N-terminus, the 656-residue chain is MSELSDEASEPELLNRSLSMWHGLGTQVSGEELDVPLDLHTAASIGQYEVVKECVQRRELDLNKKNGGGWTPLMYASYIGHDTIVHLLLEAGVSVNVPTPEGQTPLMLASSCGNESIAYFLLQQGAELEMKDIQGWTALFHCTSAGHQHMVRFLLDSGANANVREPICGFTPLMEAAAAGHEIIVQYFLNHGVKVDARDHSGATARMLAKQYGHMKIVALMDTYSPSLPKSLYRSPEKYEDLSSSDESCPAPQRQRPCRKKGVSIHEGPRALARITGIGLGGRAPRPRYEQAPPRGYVTFNSSGENPLEEEGLCCRDVTSPINERDVESSSSSSSREEHAFCANLGPVQSSSSSEGLARAQGLSSEASVESNEDSDHACKSSARKQAKSYMKTKNPDSQWPPRAATDREGFLAESSPQTQRAPYSGPQDLAALLEQIGCLKYLQVFEEQDVDLRIFLTLTESDLKEIGITLFGPKRKMTSAIARWHSSARPPGDALELAYADRLEAEMQELAIQLHKRCEEVEATRGQVCQEQELRAVVESCLLEQDRAREDLQARLRETWALARDAALVLDQLRACQAELSSRVRQDQPPGAATLGLAVPPADSKGWQASLQAMSLPELSGALEDRVREMGQALCLVTQSLEKLQVLNGKKWRET.

The tract at residues 1–422 (MSELSDEASE…AESSPQTQRA (422 aa)) is interaction with NEK7. 2 positions are modified to phosphoserine: Ser2 and Ser5. ANK repeat units follow at residues 34-64 (DVPL…DLNK), 68-97 (GGWT…SVNV), 101-130 (EGQT…ELEM), 134-163 (QGWT…NANV), 168-197 (CGFT…KVDA), and 201-220 (SGAT…IVAL). Asn96 carries the post-translational modification 3-hydroxyasparagine. Ser201, Ser225, Ser243, Ser244, and Ser245 each carry phosphoserine. Disordered regions lie at residues 235–265 (SPEK…GVSI) and 277–312 (GIGL…EEEG). Thr319 is subject to Phosphothreonine. Phosphoserine occurs at positions 320, 368, 371, and 375. The disordered stretch occupies residues 346-425 (GPVQSSSSSE…SPQTQRAPYS (80 aa)). Residues 425–488 (SGPQDLAALL…TSAIARWHSS (64 aa)) enclose the SAM domain. Positions 501–526 (ADRLEAEMQELAIQLHKRCEEVEATR) form a coiled coil. Ser541 bears the Phosphoserine mark.

In terms of assembly, homooligomer. Interacts (via SAM domain) with ANKS6 (via SAM domain). Interacts with BICC1. Interacts with NPHP1. Interacts with NEK8. Interacts with HIF1AN. Interacts with NEK7; this interaction alters the subcellular distribution of NEK7 by preventing its nuclear translocation. Hydroxylated at Asn-96, most probably by HIF1AN. In terms of processing, phosphorylations at Ser-5, Ser-225, Thr-319, Ser-320, Ser-368 and Ser-371 occur in a NEK7-dependent manner. Post-translationally, polyubiquitinated.

The protein localises to the cell projection. Its subcellular location is the cilium. It localises to the cytoplasm. May be involved in vasopressin signaling in the kidney. The sequence is that of Ankyrin repeat and SAM domain-containing protein 3 (ANKS3) from Homo sapiens (Human).